We begin with the raw amino-acid sequence, 815 residues long: uncharacterized protein (815 aa).

An N-terminal signal peptide occupies residues Met1 to Ala25. Transmembrane regions (helical) follow at residues Phe127 to Gly147, Ile157 to Met177, Ser311 to Phe331, Phe333 to Ala353, Val372 to Ile392, and Gly401 to His421. The segment at Lys483 to Arg815 is disordered. The segment covering His513–Ser543 has biased composition (polar residues). 2 stretches are compositionally biased toward basic and acidic residues: residues Lys544–Gln563 and Gln599–Val614. Over residues Lys619–Ala630 the composition is skewed to polar residues. The span at Glu648 to Gln658 shows a compositional bias: basic and acidic residues. The span at Glu665 to Phe678 shows a compositional bias: polar residues. The segment covering Lys696–Gln705 has biased composition (basic and acidic residues). Polar residues predominate over residues Ser720–Ala732. Positions Asn734–Gln757 are enriched in basic and acidic residues. Residues Pro773–Leu793 show a composition bias toward polar residues. Residues Ile796 to Arg815 are compositionally biased toward basic and acidic residues.

Its subcellular location is the cell membrane. This is an uncharacterized protein from Bacillus subtilis (strain 168).